The sequence spans 356 residues: 1-deoxy-D-xylulose 5-phosphate reductoisomerase (356 aa).

NADPH-binding residues include T7, G8, S9, I10, G31, N33, and N111. K112 contributes to the 1-deoxy-D-xylulose 5-phosphate binding site. E113 provides a ligand contact to NADPH. D131 is a binding site for Mn(2+). Residues S132, E133, S155, and H178 each contribute to the 1-deoxy-D-xylulose 5-phosphate site. Residue E133 coordinates Mn(2+). G184 provides a ligand contact to NADPH. Residues S191, N196, K197, and E200 each contribute to the 1-deoxy-D-xylulose 5-phosphate site. E200 contacts Mn(2+).

It belongs to the DXR family. Mg(2+) is required as a cofactor. The cofactor is Mn(2+).

It carries out the reaction 2-C-methyl-D-erythritol 4-phosphate + NADP(+) = 1-deoxy-D-xylulose 5-phosphate + NADPH + H(+). The protein operates within isoprenoid biosynthesis; isopentenyl diphosphate biosynthesis via DXP pathway; isopentenyl diphosphate from 1-deoxy-D-xylulose 5-phosphate: step 1/6. Catalyzes the NADPH-dependent rearrangement and reduction of 1-deoxy-D-xylulose-5-phosphate (DXP) to 2-C-methyl-D-erythritol 4-phosphate (MEP). This chain is 1-deoxy-D-xylulose 5-phosphate reductoisomerase, found in Campylobacter jejuni subsp. jejuni serotype O:6 (strain 81116 / NCTC 11828).